The primary structure comprises 190 residues: Putative manganese efflux pump MntP (190 aa).

The next 5 helical transmembrane spans lie at 37–57 (LILA…GWGI), 64–84 (LSFI…GVGA), 111–131 (LILG…MAFV), 135–155 (IITL…VGAW), and 164–184 (FGGW…GNIL).

The protein belongs to the MntP (TC 9.B.29) family.

Its subcellular location is the cell membrane. In terms of biological role, probably functions as a manganese efflux pump. This chain is Putative manganese efflux pump MntP, found in Corynebacterium efficiens (strain DSM 44549 / YS-314 / AJ 12310 / JCM 11189 / NBRC 100395).